Reading from the N-terminus, the 204-residue chain is Phosphopantothenoylcysteine decarboxylase (204 aa).

Residues Thr-53 and 104 to 107 contribute to the FMN site; that span reads DANT. Residue Asn-140 coordinates substrate. Cys-173 serves as the catalytic Proton donor.

The protein belongs to the HFCD (homooligomeric flavin containing Cys decarboxylase) superfamily. In terms of assembly, homotrimer. Requires FMN as cofactor.

The enzyme catalyses N-[(R)-4-phosphopantothenoyl]-L-cysteine + H(+) = (R)-4'-phosphopantetheine + CO2. Its pathway is cofactor biosynthesis; coenzyme A biosynthesis; CoA from (R)-pantothenate: step 3/5. Catalyzes the decarboxylation of the cysteine moiety of 4-phosphopantothenoylcysteine to form 4'-phosphopantotheine and this reaction forms part of the biosynthesis of coenzyme A. The chain is Phosphopantothenoylcysteine decarboxylase (Ppcdc) from Mus musculus (Mouse).